A 434-amino-acid chain; its full sequence is UDP-N-acetylmuramoylalanine--D-glutamate ligase (434 aa).

126–132 is an ATP binding site; that stretch reads GTSGKTT.

The protein belongs to the MurCDEF family.

The protein resides in the cytoplasm. The enzyme catalyses UDP-N-acetyl-alpha-D-muramoyl-L-alanine + D-glutamate + ATP = UDP-N-acetyl-alpha-D-muramoyl-L-alanyl-D-glutamate + ADP + phosphate + H(+). It participates in cell wall biogenesis; peptidoglycan biosynthesis. In terms of biological role, cell wall formation. Catalyzes the addition of glutamate to the nucleotide precursor UDP-N-acetylmuramoyl-L-alanine (UMA). The chain is UDP-N-acetylmuramoylalanine--D-glutamate ligase from Desulfovibrio desulfuricans (strain ATCC 27774 / DSM 6949 / MB).